We begin with the raw amino-acid sequence, 415 residues long: Alpha-N-acetylgalactosaminidase (415 aa).

A signal peptide spans 1-17 (MLQKTVLLLALVAQVLM). 3 disulfides stabilise this stretch: C38–C80, C42–C49, and C127–C158. Residues 78–79 (DD) and K154 each bind substrate. The active-site Nucleophile is the D156. An N-linked (GlcNAc...) asparagine glycan is attached at N177. A disulfide bond links C187 and C209. A substrate-binding site is contributed by S188. The N-linked (GlcNAc...) asparagine glycan is linked to N201. Substrate contacts are provided by R213 and D217. D217 serves as the catalytic Proton donor. Residues S322 and S332 each carry the phosphoserine modification. N-linked (GlcNAc...) asparagine glycosylation occurs at N385.

It belongs to the glycosyl hydrolase 27 family. In terms of assembly, homodimer.

It is found in the lysosome. The enzyme catalyses Cleavage of non-reducing alpha-(1-&gt;3)-N-acetylgalactosamine residues from human blood group A and AB mucin glycoproteins, Forssman hapten and blood group A lacto series glycolipids.. It carries out the reaction a neolactoside IV(3)-alpha-GalNAc,IV(2)-alpha-Fuc-nLc4Cer(d18:1(4E)) + H2O = a neolactoside IV(2)-alpha-Fuc-nLc4Cer(d18:1(4E)) + N-acetyl-alpha-D-galactosamine. It catalyses the reaction a neolactoside IV(3)-alpha-GalNAc,IV(2)-alpha-Fuc-nLc4Cer(d18:0) + H2O = a neolactoside IV(2)-alpha-Fuc-nLc4Cer(d18:0) + N-acetyl-alpha-D-galactosamine. The catalysed reaction is a globoside IV3GalNAc-Gb4Cer + H2O = N-acetyl-alpha-D-galactosamine + a globoside Gb4Cer. Its function is as follows. Removes terminal alpha-N-acetylgalactosamine residues from glycolipids and glycopeptides. Required for the breakdown of glycolipids. This chain is Alpha-N-acetylgalactosaminidase (Naga), found in Mus musculus (Mouse).